Consider the following 145-residue polypeptide: Fatty acid-binding protein homolog 4 (145 aa).

This sequence belongs to the calycin superfamily. Fatty-acid binding protein (FABP) family.

In Caenorhabditis elegans, this protein is Fatty acid-binding protein homolog 4 (lbp-4).